A 660-amino-acid chain; its full sequence is MANTPVNYQLTRTANAIPEIFVGGTFAEIKQNLIEWLNGQNEFLDYDFEGSRLNVLCDLLAYNTLYIQQFGNAAVYESFMRTANLRSSVVQAAQDNGYLPTSKSAAQTEIMLTCTDALNRNYITIPRGTRFLAYAKDTSVNPYNFVSREDVIAIRDKNNQYFPRLKLAQGRIVRTEIIYDKLTPIIIYDKNIDRNQVKLYVDGAEWINWTRKSMVHAGSTSTIYYMRETIDGNTEFYFGEGEISVNASEGALTANYIGGLKPTQNSTIVIEYISTNGADANGAVGFSYADTLTNITVININENPNDDPDFVGADGGGDPEDIERIRELGTIKRETQQRCVTATDYDTFVSERFGSIIQAVQTFTDSTKPGYAFIAAKPKSGLYLTTVQREDIKNYLKDYNLAPITPSIISPNYLFIKTNLKVTYALNKLQESEQWLEGQIIDKIDRYYTEDVEIFNSSFAKSKMLTYVDDADHSVIGSSATIQMVREVQNFYKTPEAGIKYNNQIKDRSMESNTFSFNSGRKVVNPDTGLEEDVLYDVRIVSTDRDSKGIGKVIIGPFASGDVTENENIQPYTGNDFNKLANSDGRDKYYVIGEINYPADVIYWNIAKINLTSEKFEVQTIELYSDPTDDVIFTRDGSLIVFENDLRPQYLTIDLEPISQ.

It belongs to the T4likevirus baseplate wedge protein gp6 family. Homodimer; each gp6 molecule in the ring interacts with its two neighbors, forming an N-terminal dimer with one and a C-terminal dimer with the other. Heterotrimer with gp7; gp6 is part of a (gp6)2-gp7 heterotrimeric molecule. The (gp6)2-gp7 heterotrimeric molecule further interacts with gp25 and gp53; the gp25-(gp6)2-gp7 module is involved in sheath contraction. Part of the baseplate macromolecular complex which consists of gp5, gp5.4, gp27 (central spike complex); gp6, gp25, gp53 (inner baseplate); gp7, gp8 (intermediate baseplate); gp9, gp10, gp11, gp12 (peripheral); gp48 and gp54 (proximal region of the tail tube).

Its subcellular location is the virion. Baseplate protein that is located next to the tail tube (inner baseplate). Involved in the tail assembly. The gp25-(gp6)2-gp7 module is involved in sheath contraction. In Escherichia coli (Bacteriophage T4), this protein is Baseplate wedge protein gp6 (6).